The sequence spans 428 residues: 5'-nucleotidase domain-containing protein 4 (428 aa).

D22 (nucleophile) is an active-site residue. The Mg(2+) site is built by D22, D24, and D317. Residue D24 is the Proton donor of the active site.

It belongs to the 5'(3')-deoxyribonucleotidase family.

The sequence is that of 5'-nucleotidase domain-containing protein 4 (NT5DC4) from Homo sapiens (Human).